Reading from the N-terminus, the 275-residue chain is Dermonecrotic toxin LhSicTox-alphaVI1ii (275 aa).

His5 is an active-site residue. 2 residues coordinate Mg(2+): Glu25 and Asp27. The active-site Nucleophile is His41. 2 disulfide bridges follow: Cys45–Cys51 and Cys47–Cys192. Asp85 contributes to the Mg(2+) binding site.

The protein belongs to the arthropod phospholipase D family. Class II subfamily. Requires Mg(2+) as cofactor. As to expression, expressed by the venom gland.

The protein localises to the secreted. The enzyme catalyses an N-(acyl)-sphingosylphosphocholine = an N-(acyl)-sphingosyl-1,3-cyclic phosphate + choline. It catalyses the reaction an N-(acyl)-sphingosylphosphoethanolamine = an N-(acyl)-sphingosyl-1,3-cyclic phosphate + ethanolamine. It carries out the reaction a 1-acyl-sn-glycero-3-phosphocholine = a 1-acyl-sn-glycero-2,3-cyclic phosphate + choline. The catalysed reaction is a 1-acyl-sn-glycero-3-phosphoethanolamine = a 1-acyl-sn-glycero-2,3-cyclic phosphate + ethanolamine. Its function is as follows. Dermonecrotic toxins cleave the phosphodiester linkage between the phosphate and headgroup of certain phospholipids (sphingolipid and lysolipid substrates), forming an alcohol (often choline) and a cyclic phosphate. This toxin acts on sphingomyelin (SM). It may also act on ceramide phosphoethanolamine (CPE), lysophosphatidylcholine (LPC) and lysophosphatidylethanolamine (LPE), but not on lysophosphatidylserine (LPS), and lysophosphatidylglycerol (LPG). It acts by transphosphatidylation, releasing exclusively cyclic phosphate products as second products. Induces dermonecrosis, hemolysis, increased vascular permeability, edema, inflammatory response, and platelet aggregation. The polypeptide is Dermonecrotic toxin LhSicTox-alphaVI1ii (Loxosceles hirsuta (Recluse spider)).